The following is a 483-amino-acid chain: Proton-coupled amino acid transporter 2 (483 aa).

Topologically, residues 1–58 (MSVTKSTEGPQGAVAIKLDLMSPPESAKKLENKDSTFLDESPSESAGLKKTKGITVFQ) are cytoplasmic. The segment covering 26 to 36 (SAKKLENKDST) has biased composition (basic and acidic residues). The disordered stretch occupies residues 26–46 (SAKKLENKDSTFLDESPSESA). A helical membrane pass occupies residues 59–79 (ALIHLVKGNMGTGILGLPLAV). Topologically, residues 80 to 81 (KN) are extracellular. Residues 82–102 (AGILMGPLSLLVMGFIACHCM) form a helical membrane-spanning segment. Topologically, residues 103-148 (HILVKCAQRFCKRLNKPFMDYGDTVMHGLEANPNAWLQNHAHWGRH) are cytoplasmic. Residues 149–169 (IVSFFLIITQLGFCCVYIVFL) traverse the membrane as a helical segment. Topologically, residues 170–197 (ADNLKQVVEAVNSTTNNCYSNETVILTP) are extracellular. The helical transmembrane segment at 198-218 (TMDSRLYMLSFLPFLVLLVLI) threads the bilayer. Residues 219 to 222 (RNLR) are Cytoplasmic-facing. The chain crosses the membrane as a helical span at residues 223 to 243 (ILTIFSMLANISMLVSLVIII). At 244–264 (QYITQEIPDPSRLPLVASWKT) the chain is on the extracellular side. A helical transmembrane segment spans residues 265–285 (YPLFFGTAIFSFESIGVVLPL). The Cytoplasmic segment spans residues 286-296 (ENKMKNARHFP). The chain crosses the membrane as a helical span at residues 297–317 (AILSLGMSIVTSLYIGMAALG). Topologically, residues 318–349 (YLRFGDDIKASISLNLPNCWLYQSVKLLYIAG) are extracellular. Residues 350 to 370 (ILCTYALQFYVPAEIIIPFAI) traverse the membrane as a helical segment. At 371–379 (SRVSTRWAL) the chain is on the cytoplasmic side. The chain crosses the membrane as a helical span at residues 380–400 (PLDLSIRLVMVCLTCLLAILI). At 401 to 404 (PRLD) the chain is on the extracellular side. The chain crosses the membrane as a helical span at residues 405 to 425 (LVISLVGSVSGTALALIIPPL). Residues 426-437 (LEVTTFYSEGMS) are Cytoplasmic-facing. The helical transmembrane segment at 438 to 458 (PLTIFKDALISILGFVGFVVG) threads the bilayer. Topologically, residues 459–483 (TYQALDELLKSEDSHPFSNSTTFVR) are extracellular.

It belongs to the amino acid/polyamine transporter 2 family. In terms of tissue distribution, abundantly expressed in kidney and muscle. Expressed in the S1 segment of the proximal tubule close to the glomerulus.

The protein localises to the cell membrane. It is found in the endoplasmic reticulum membrane. It localises to the recycling endosome membrane. It carries out the reaction glycine(in) + H(+)(in) = glycine(out) + H(+)(out). The enzyme catalyses L-alanine(in) + H(+)(in) = L-alanine(out) + H(+)(out). It catalyses the reaction D-alanine(in) + H(+)(in) = D-alanine(out) + H(+)(out). The catalysed reaction is L-proline(out) + H(+)(out) = L-proline(in) + H(+)(in). It carries out the reaction D-proline(out) + H(+)(out) = D-proline(in) + H(+)(in). The enzyme catalyses 4-hydroxy-L-proline(in) + H(+)(in) = 4-hydroxy-L-proline(out) + H(+)(out). It catalyses the reaction L-serine(in) + H(+)(in) = L-serine(out) + H(+)(out). The catalysed reaction is D-serine(out) + H(+)(out) = D-serine(in) + H(+)(in). It carries out the reaction beta-alanine(in) + H(+)(in) = beta-alanine(out) + H(+)(out). The enzyme catalyses 4-aminobutanoate(in) + H(+)(in) = 4-aminobutanoate(out) + H(+)(out). It catalyses the reaction sarcosine(in) + H(+)(in) = sarcosine(out) + H(+)(out). The catalysed reaction is N,N-dimethylglycine(in) + H(+)(in) = N,N-dimethylglycine(out) + H(+)(out). Electrogenic proton/amino acid symporter with a high selectivity for the small side chains amino acids glycine, alanine and proline, where both L- and D-enantiomers are transported. Extension of the backbone length, as in beta-alanine and 4-aminobutanoate or methylation of the amino group, as in sarcosine and N,N-dimethylglycine, are also tolerated but decrease transport efficiency. A free carboxyl group is preferred. The chain is Proton-coupled amino acid transporter 2 from Homo sapiens (Human).